Here is an 80-residue protein sequence, read N- to C-terminus: Moroidotoxin A (80 aa).

An N-terminal signal peptide occupies residues 1 to 27; it reads MAAVKKHLRFALVAAITIALLVAGSVA. The propeptide occupies 28–44; that stretch reads DESSEDIDNIVIKTPLD. 3 disulfides stabilise this stretch: cysteine 48–cysteine 65, cysteine 53–cysteine 67, and cysteine 61–cysteine 76.

The protein belongs to the gympietide family. In terms of tissue distribution, expressed in trichomes, that are stiff epidermal hairs located on the surface of petioles and leaves. Not expressed in other aerial parts.

The protein resides in the secreted. In terms of biological role, neurotoxin certainly responsible for the defensive, persistent, and painful stings of the giant stinging tree. Inhibits inactivation of Nav1.7/SCN9A sodium channel in sensory neurons by directly interacting with TMEM233, a newly described Nav-interacting protein. Has virtually no effect on Nav1.7/SCN9A function in heterologous expression systems and in neurons that do not express TMEM233. Also weakly but significantly affects Nav1.8/SCN10A. Coexpression of TMEM233 with Nav also confers ExTxA sensitivity to Nav1.1-Nav1.6. On the Nav1.7/SCN9A channel, causes a significant hyperpolarizing shift in the voltage dependence of activation. Its effects on Nav currents are irreversible, with no apparent reduction in activity even after repeated wash steps over 30 minutes. In vivo, induces nocifensive behavior in mice (licking or biting and shaking or lifting of the affected paw) lasting for approximately 1 hour. The chain is Moroidotoxin A from Dendrocnide moroides (Gympie stinging tree).